Reading from the N-terminus, the 426-residue chain is Glutamate-1-semialdehyde 2,1-aminomutase (426 aa).

The residue at position 265 (Lys-265) is an N6-(pyridoxal phosphate)lysine.

It belongs to the class-III pyridoxal-phosphate-dependent aminotransferase family. HemL subfamily. Homodimer. Pyridoxal 5'-phosphate serves as cofactor.

Its subcellular location is the cytoplasm. The enzyme catalyses (S)-4-amino-5-oxopentanoate = 5-aminolevulinate. It functions in the pathway porphyrin-containing compound metabolism; protoporphyrin-IX biosynthesis; 5-aminolevulinate from L-glutamyl-tRNA(Glu): step 2/2. The protein is Glutamate-1-semialdehyde 2,1-aminomutase of Shigella sonnei (strain Ss046).